Here is a 394-residue protein sequence, read N- to C-terminus: Magnesium transporter MRS2-2 (394 aa).

Positions 115–145 (PVGNASHNGGQGDGKEIAGAQNDGDTGDEDE) are disordered. A run of 2 helical transmembrane segments spans residues 329-349 (LVLS…GIFG) and 366-386 (YVVG…MSYA). A Required for magnesium transport activity motif is present at residues 349-351 (GMN).

Belongs to the CorA metal ion transporter (MIT) (TC 1.A.35.5) family. As to expression, expressed in the whole plant but preferentially in the mature anthers.

It is found in the membrane. Low-affinity magnesium transporter that mediates the influx of magnesium. Plays a crucial role in male gametophyte development and male fertility. This Arabidopsis thaliana (Mouse-ear cress) protein is Magnesium transporter MRS2-2 (MRS2-2).